We begin with the raw amino-acid sequence, 400 residues long: uncharacterized protein (400 aa).

The TR mART core domain maps to 161-380; the sequence is NDLLNIIDIV…YVVKVIVMRL (220 aa).

This is an uncharacterized protein from Acanthamoeba polyphaga (Amoeba).